A 68-amino-acid polypeptide reads, in one-letter code: DNA-directed RNA polymerase subunit omega (68 aa).

The protein belongs to the RNA polymerase subunit omega family. The RNAP catalytic core consists of 2 alpha, 1 beta, 1 beta' and 1 omega subunit. When a sigma factor is associated with the core the holoenzyme is formed, which can initiate transcription.

It carries out the reaction RNA(n) + a ribonucleoside 5'-triphosphate = RNA(n+1) + diphosphate. Promotes RNA polymerase assembly. Latches the N- and C-terminal regions of the beta' subunit thereby facilitating its interaction with the beta and alpha subunits. This chain is DNA-directed RNA polymerase subunit omega, found in Trichlorobacter lovleyi (strain ATCC BAA-1151 / DSM 17278 / SZ) (Geobacter lovleyi).